A 230-amino-acid polypeptide reads, in one-letter code: Ion-translocating oxidoreductase complex subunit E (230 aa).

A run of 5 helical transmembrane segments spans residues 22–42, 63–83, 86–106, 125–145, and 182–202; these read LLGLCPLLAVTSTATNALGLG, TPAEIRIPIYVMIIASVVSAV, LINAYAFGLYQSLGIFIPLIV, WLSALDGFSIGMGATGAMFVL, and PFLLAMLPPGAFIGLGLMLAV.

This sequence belongs to the NqrDE/RnfAE family. The complex is composed of six subunits: RsxA, RsxB, RsxC, RsxD, RsxE and RsxG.

The protein localises to the cell inner membrane. Its function is as follows. Part of a membrane-bound complex that couples electron transfer with translocation of ions across the membrane. Required to maintain the reduced state of SoxR. The sequence is that of Ion-translocating oxidoreductase complex subunit E from Salmonella paratyphi A (strain ATCC 9150 / SARB42).